A 335-amino-acid chain; its full sequence is MKFVDSASIRIEAGKGGAGCLGFRREKYIPDGGPDGGDGGDGGHIYFQGQEGFNTLSEFRFKRLFRAKNGQPGSGQNKRGKSAQHLTVEIPLGTKIYDLETDELIGEMIEHEQIILVAKGGFHGLGNTRFKSSINRAPRKTTPGSPGEIREIGLELSIMADIGLLGMPNAGKSSLIRQISNAKSKVANYPFTTLHPSLGVVSYYDEHIIMADIPGLIENASKGVGLGFEFLKHLFHTKALLHVVDIFPVDGSDPVENFLTIEKELKKYDQKLAKKPRLLAINKMDLLSGGDRETVVQSLLKGTRYNGKVYRISALNGLGCKNLVAGLFKLVKENE.

The Obg domain occupies 1-159 (MKFVDSASIR…REIGLELSIM (159 aa)). The region spanning 160–332 (ADIGLLGMPN…LVAGLFKLVK (173 aa)) is the OBG-type G domain. Residues 166–173 (GMPNAGKS), 191–195 (FTTLH), 212–215 (DIPG), 282–285 (NKMD), and 313–315 (SAL) contribute to the GTP site. Ser-173 and Thr-193 together coordinate Mg(2+).

The protein belongs to the TRAFAC class OBG-HflX-like GTPase superfamily. OBG GTPase family. As to quaternary structure, monomer. Requires Mg(2+) as cofactor.

The protein resides in the cytoplasm. Functionally, an essential GTPase which binds GTP, GDP and possibly (p)ppGpp with moderate affinity, with high nucleotide exchange rates and a fairly low GTP hydrolysis rate. Plays a role in control of the cell cycle, stress response, ribosome biogenesis and in those bacteria that undergo differentiation, in morphogenesis control. In Ruthia magnifica subsp. Calyptogena magnifica, this protein is GTPase Obg.